The primary structure comprises 309 residues: Protein FdhE homolog (309 aa).

This sequence belongs to the FdhE family.

The protein localises to the cytoplasm. Necessary for formate dehydrogenase activity. This chain is Protein FdhE homolog, found in Cronobacter sakazakii (strain ATCC BAA-894) (Enterobacter sakazakii).